A 368-amino-acid chain; its full sequence is UDP-N-acetylglucosamine--N-acetylmuramyl-(pentapeptide) pyrophosphoryl-undecaprenol N-acetylglucosamine transferase (368 aa).

Residues 10–12, N126, S200, I255, and Q300 contribute to the UDP-N-acetyl-alpha-D-glucosamine site; that span reads TGG.

It belongs to the glycosyltransferase 28 family. MurG subfamily.

It is found in the cell membrane. The catalysed reaction is Mur2Ac(oyl-L-Ala-gamma-D-Glu-L-Lys-D-Ala-D-Ala)-di-trans,octa-cis-undecaprenyl diphosphate + UDP-N-acetyl-alpha-D-glucosamine = beta-D-GlcNAc-(1-&gt;4)-Mur2Ac(oyl-L-Ala-gamma-D-Glu-L-Lys-D-Ala-D-Ala)-di-trans,octa-cis-undecaprenyl diphosphate + UDP + H(+). It participates in cell wall biogenesis; peptidoglycan biosynthesis. In terms of biological role, cell wall formation. Catalyzes the transfer of a GlcNAc subunit on undecaprenyl-pyrophosphoryl-MurNAc-pentapeptide (lipid intermediate I) to form undecaprenyl-pyrophosphoryl-MurNAc-(pentapeptide)GlcNAc (lipid intermediate II). This Lactobacillus acidophilus (strain ATCC 700396 / NCK56 / N2 / NCFM) protein is UDP-N-acetylglucosamine--N-acetylmuramyl-(pentapeptide) pyrophosphoryl-undecaprenol N-acetylglucosamine transferase.